The following is an 821-amino-acid chain: DNA replication licensing factor MCM6 (821 aa).

Met1 carries the N-acetylmethionine modification. Phosphoserine is present on residues Ser13, Ser219, and Ser271. At Thr278 the chain carries Phosphothreonine. One can recognise an MCM domain in the interval 346-553 (LYHNLCTSLF…TDYAIARRIV (208 aa)). The ATP site is built by His359, Ser399, Thr400, Ala401, Lys402, Ser403, and Asn504. Residues 528–531 (SRFD) carry the Arginine finger motif. ADP-binding residues include Arg619 and Glu622. Position 643 is an N6-acetyllysine (Lys643). The disordered stretch occupies residues 676–708 (TDEGQGGVNGHADSPAPVNRFNGSSEDASQETV). Phosphoserine is present on residues Ser689, Ser704, and Ser762. The segment covering 696-708 (FNGSSEDASQETV) has biased composition (polar residues). Thr791 carries the post-translational modification Phosphothreonine.

Belongs to the MCM family. Component of the MCM2-7 complex. The complex forms a toroidal hexameric ring with the proposed subunit order MCM2-MCM6-MCM4-MCM7-MCM3-MCM5. Component of the CMG helicase complex, a hexameric ring of related MCM2-7 subunits stabilized by CDC45 and the tetrameric GINS complex. May interact with MCM10. Interacts with TIPIN. Interacts with CDT1. Interacts with MCMBP. Interacts with DDI2. O-glycosylated (O-GlcNAcylated), in a cell cycle-dependent manner.

The protein resides in the nucleus. It localises to the chromosome. It carries out the reaction ATP + H2O = ADP + phosphate + H(+). In terms of biological role, acts as a component of the MCM2-7 complex (MCM complex) which is the replicative helicase essential for 'once per cell cycle' DNA replication initiation and elongation in eukaryotic cells. Core component of CDC45-MCM-GINS (CMG) helicase, the molecular machine that unwinds template DNA during replication, and around which the replisome is built. The active ATPase sites in the MCM2-7 ring are formed through the interaction surfaces of two neighboring subunits such that a critical structure of a conserved arginine finger motif is provided in trans relative to the ATP-binding site of the Walker A box of the adjacent subunit. The six ATPase active sites, however, are likely to contribute differentially to the complex helicase activity. This Mus musculus (Mouse) protein is DNA replication licensing factor MCM6 (Mcm6).